Reading from the N-terminus, the 120-residue chain is UPF0231 protein NT01EI_0766 (120 aa).

It belongs to the UPF0231 family.

The polypeptide is UPF0231 protein NT01EI_0766 (Edwardsiella ictaluri (strain 93-146)).